The primary structure comprises 428 residues: 3-oxo-tetronate kinase (428 aa).

Residues serine 267, 365-368 (GGET), and glycine 409 each bind ATP.

The protein belongs to the four-carbon acid sugar kinase family.

It carries out the reaction 3-dehydro-L-erythronate + ATP = 3-dehydro-4-O-phospho-L-erythronate + ADP + H(+). It catalyses the reaction 3-dehydro-D-erythronate + ATP = 3-dehydro-4-O-phospho-D-erythronate + ADP + H(+). In terms of biological role, catalyzes the ATP-dependent phosphorylation of 3-oxo-tetronate to 3-oxo-tetronate 4-phosphate. In Burkholderia multivorans (strain ATCC 17616 / 249), this protein is 3-oxo-tetronate kinase.